A 344-amino-acid polypeptide reads, in one-letter code: N-acetyl-gamma-glutamyl-phosphate reductase (344 aa).

The active site involves cysteine 150.

Belongs to the NAGSA dehydrogenase family. Type 1 subfamily.

It is found in the cytoplasm. It carries out the reaction N-acetyl-L-glutamate 5-semialdehyde + phosphate + NADP(+) = N-acetyl-L-glutamyl 5-phosphate + NADPH + H(+). It functions in the pathway amino-acid biosynthesis; L-arginine biosynthesis; N(2)-acetyl-L-ornithine from L-glutamate: step 3/4. Functionally, catalyzes the NADPH-dependent reduction of N-acetyl-5-glutamyl phosphate to yield N-acetyl-L-glutamate 5-semialdehyde. The sequence is that of N-acetyl-gamma-glutamyl-phosphate reductase from Pseudomonas fluorescens (strain Pf0-1).